A 427-amino-acid chain; its full sequence is Glucan 1,3-beta-glucosidase 2 (427 aa).

The N-terminal stretch at 1 to 17 (MLISTFIISSLLSIALA) is a signal peptide. Residue glutamate 217 is the Proton donor of the active site. Intrachain disulfides connect cysteine 299/cysteine 426 and cysteine 324/cysteine 355. Catalysis depends on glutamate 316, which acts as the Nucleophile.

The protein belongs to the glycosyl hydrolase 5 (cellulase A) family.

Its subcellular location is the secreted. It carries out the reaction Successive hydrolysis of beta-D-glucose units from the non-reducing ends of (1-&gt;3)-beta-D-glucans, releasing alpha-glucose.. In terms of biological role, beta-glucanases participate in the metabolism of beta-glucan, the main structural component of the cell wall. It could also function biosynthetically as a transglycosylase. The protein is Glucan 1,3-beta-glucosidase 2 (EXG2) of Wickerhamomyces anomalus (Yeast).